A 57-amino-acid chain; its full sequence is Bowman-Birk type proteinase inhibitor B4 (57 aa).

Disulfide bonds link cysteine 6–cysteine 55, cysteine 12–cysteine 17, cysteine 26–cysteine 33, and cysteine 30–cysteine 47.

The protein belongs to the Bowman-Birk serine protease inhibitor family. As to expression, expressed in bulb (at protein level).

Functionally, serine protease inhibitor. Inhibits trypsin (Ki = 110 nM) and very weakly inhibits chymotrypsin (Ki =1200 nM). Does not inhibit bacterial subtilisin. This chain is Bowman-Birk type proteinase inhibitor B4, found in Hyacinthus orientalis (Common hyacinth).